A 381-amino-acid polypeptide reads, in one-letter code: Transcriptional regulatory protein FlgR (381 aa).

In terms of domain architecture, Response regulatory spans 2 to 113; the sequence is KIAIVEDDIN…LLLESIYRTK (112 aa). At Asp-51 the chain carries 4-aspartylphosphate. The region spanning 136–365 is the Sigma-54 factor interaction domain; sequence FLAASKALEE…LLGVVERAAI (230 aa). Residues 164-171 and 227-236 contribute to the ATP site; these read GESGVGKE and ANKGTIFLDE.

Post-translationally, phosphorylated by FlgS.

Its function is as follows. Member of the two-component regulatory system FlgR/FlgS that induces the transcriptional induction of the genes needed in motility and flagellar biogenesis. Upon phosphorylation by FlgS, functions as a transcriptional regulator and activates transcription of RpoN-dependent flagellar genes. In Helicobacter pylori (strain ATCC 700392 / 26695) (Campylobacter pylori), this protein is Transcriptional regulatory protein FlgR (flgR).